Consider the following 211-residue polypeptide: Protein-methionine-sulfoxide reductase heme-binding subunit MsrQ (211 aa).

5 helical membrane passes run 45-65 (HFTG…TPLA), 82-102 (LWCF…ELGV), 116-136 (PYLT…FTST), 153-173 (FVYL…KIIS), and 178-198 (IYAG…LSLF).

It belongs to the MsrQ family. As to quaternary structure, heterodimer of a catalytic subunit (MsrP) and a heme-binding subunit (MsrQ). FMN is required as a cofactor. Heme b serves as cofactor.

The protein localises to the cell inner membrane. Part of the MsrPQ system that repairs oxidized periplasmic proteins containing methionine sulfoxide residues (Met-O), using respiratory chain electrons. Thus protects these proteins from oxidative-stress damage caused by reactive species of oxygen and chlorine generated by the host defense mechanisms. MsrPQ is essential for the maintenance of envelope integrity under bleach stress, rescuing a wide series of structurally unrelated periplasmic proteins from methionine oxidation, including the primary periplasmic chaperone SurA and the lipoprotein Pal. MsrQ provides electrons for reduction to the reductase catalytic subunit MsrP, using the quinone pool of the respiratory chain. The protein is Protein-methionine-sulfoxide reductase heme-binding subunit MsrQ of Escherichia coli O127:H6 (strain E2348/69 / EPEC).